The chain runs to 280 residues: Protoheme IX farnesyltransferase (280 aa).

Transmembrane regions (helical) follow at residues 2 to 21 (VVATMLGGMWVASRYLRAGL), 30 to 50 (AAVPPAQLALALLGTVLVVSG), 83 to 103 (LALWFGIALSAASIPVLLVGV), 105 to 125 (ATTGVLAAAALLSYVLVYTPL), 131 to 151 (LSLPIGAIPGAIPPLLGWTSV), 160 to 180 (FLLFAVMFLWQIPHFLAISLF), 206 to 226 (IVGYLALLVLSSVLFVPLGVA), 229 to 249 (VYLGAAILLGGAFFGLGVYGL), and 260 to 280 (QVFFASMVYLVLLFAALMIGA).

This sequence belongs to the UbiA prenyltransferase family. Protoheme IX farnesyltransferase subfamily.

It is found in the cell inner membrane. The catalysed reaction is heme b + (2E,6E)-farnesyl diphosphate + H2O = Fe(II)-heme o + diphosphate. It functions in the pathway porphyrin-containing compound metabolism; heme O biosynthesis; heme O from protoheme: step 1/1. Its function is as follows. Converts heme B (protoheme IX) to heme O by substitution of the vinyl group on carbon 2 of heme B porphyrin ring with a hydroxyethyl farnesyl side group. This chain is Protoheme IX farnesyltransferase, found in Sorangium cellulosum (strain So ce56) (Polyangium cellulosum (strain So ce56)).